A 340-amino-acid chain; its full sequence is Holliday junction branch migration complex subunit RuvB (340 aa).

The interval 1–184 is large ATPase domain (RuvB-L); sequence MNENLDPTTK…FGISSRLQYY (184 aa). ATP is bound by residues Leu23, Arg24, Gly65, Lys68, Thr69, Thr70, 131–133, Arg174, Tyr184, and Arg221; that span reads EDF. Thr69 is a binding site for Mg(2+). The small ATPAse domain (RuvB-S) stretch occupies residues 185–255; that stretch reads STELLTTIVE…ISKYALKALN (71 aa). The tract at residues 258–340 is head domain (RuvB-H); the sequence is AHGLDEMDNK…INTNIQGGLF (83 aa). DNA contacts are provided by Arg313 and Arg318.

It belongs to the RuvB family. Homohexamer. Forms an RuvA(8)-RuvB(12)-Holliday junction (HJ) complex. HJ DNA is sandwiched between 2 RuvA tetramers; dsDNA enters through RuvA and exits via RuvB. An RuvB hexamer assembles on each DNA strand where it exits the tetramer. Each RuvB hexamer is contacted by two RuvA subunits (via domain III) on 2 adjacent RuvB subunits; this complex drives branch migration. In the full resolvosome a probable DNA-RuvA(4)-RuvB(12)-RuvC(2) complex forms which resolves the HJ.

The protein localises to the cytoplasm. It carries out the reaction ATP + H2O = ADP + phosphate + H(+). The RuvA-RuvB-RuvC complex processes Holliday junction (HJ) DNA during genetic recombination and DNA repair, while the RuvA-RuvB complex plays an important role in the rescue of blocked DNA replication forks via replication fork reversal (RFR). RuvA specifically binds to HJ cruciform DNA, conferring on it an open structure. The RuvB hexamer acts as an ATP-dependent pump, pulling dsDNA into and through the RuvAB complex. RuvB forms 2 homohexamers on either side of HJ DNA bound by 1 or 2 RuvA tetramers; 4 subunits per hexamer contact DNA at a time. Coordinated motions by a converter formed by DNA-disengaged RuvB subunits stimulates ATP hydrolysis and nucleotide exchange. Immobilization of the converter enables RuvB to convert the ATP-contained energy into a lever motion, pulling 2 nucleotides of DNA out of the RuvA tetramer per ATP hydrolyzed, thus driving DNA branch migration. The RuvB motors rotate together with the DNA substrate, which together with the progressing nucleotide cycle form the mechanistic basis for DNA recombination by continuous HJ branch migration. Branch migration allows RuvC to scan DNA until it finds its consensus sequence, where it cleaves and resolves cruciform DNA. The chain is Holliday junction branch migration complex subunit RuvB from Flavobacterium johnsoniae (strain ATCC 17061 / DSM 2064 / JCM 8514 / BCRC 14874 / CCUG 350202 / NBRC 14942 / NCIMB 11054 / UW101) (Cytophaga johnsonae).